The sequence spans 529 residues: Bifunctional purine biosynthesis protein PurH (529 aa).

In terms of domain architecture, MGS-like spans 1–148 (MQQRRPVRRA…KNHKDVAIVV (148 aa)). Lys287 carries the N6-acetyllysine modification.

The protein belongs to the PurH family.

The catalysed reaction is (6R)-10-formyltetrahydrofolate + 5-amino-1-(5-phospho-beta-D-ribosyl)imidazole-4-carboxamide = 5-formamido-1-(5-phospho-D-ribosyl)imidazole-4-carboxamide + (6S)-5,6,7,8-tetrahydrofolate. The enzyme catalyses IMP + H2O = 5-formamido-1-(5-phospho-D-ribosyl)imidazole-4-carboxamide. The protein operates within purine metabolism; IMP biosynthesis via de novo pathway; 5-formamido-1-(5-phospho-D-ribosyl)imidazole-4-carboxamide from 5-amino-1-(5-phospho-D-ribosyl)imidazole-4-carboxamide (10-formyl THF route): step 1/1. Its pathway is purine metabolism; IMP biosynthesis via de novo pathway; IMP from 5-formamido-1-(5-phospho-D-ribosyl)imidazole-4-carboxamide: step 1/1. This chain is Bifunctional purine biosynthesis protein PurH, found in Escherichia coli O7:K1 (strain IAI39 / ExPEC).